The following is a 1030-amino-acid chain: MDFENDQLYNWLQLANLESFYPNFIKKNVSCDSFLSFTMQDYGNVGITSLQDRKKLFHLLQQLKKQTPPISNTSSPVINSNNNNNNNNNNNNNNNNNNNNNNNNNNNNNNNNNNNNNSSGLRQPTSTSSLLSNNNLMSTQTQQSSSSSSSSSLSSKSNSNSDFMQKAQQLLKQRELERQQYAKQQQQQQSTQTKYQSSLKDFDITSSNKNNNLDDFFEDDNLYSQQQQQQQQQQQQQDFEFEEEEEEEDQQQQYDEEEEEEEEYEEDFYKEDLGEIDDGNVLDISDDEPDPNSSCIIVEGSPDEEDDDVEYIPQNESLVNGFGSMKIQQQQQQQFQPLQQQQQQQQQQQQQFYQQQIQQQQQQQQQQQQQQVQQQQQQFNNFNYSGLNEEQIKYYQQQAQYQQQVQQAQQAAIQQAQQAAALAQASQQQLQQQEQQRQQASNFFLDMNEYGQRIRVCVRKRPLNKKEIAKSEKDIIEVLPKKDLIVNEPKTKLDLSKFIEKHKFTFDGVFDESANNYQVYLHTAYPLVDSIFHKGKATCFAYGQTGSGKTHTQMGQQGDGLYALAARDIFHRLETYFKDQLQVCISFFEIYGGKLFDLLNERKKLACRENELQNVVIVGLSEKHVTSPQELMNCIIDGNKIRSTGSTGVNSDSSRSHAILQISLKNIKTNKLHGKFSFIDLAGSERGSDTYDNDKQTRKEGADINKSLLALKECIRALDQSSKHTPFRQSTLTQVLKDSFVGNSRTVMIANISPNQSSSEHTLNTLRYADRVKELGTSESNSNKKPVATYNIPAPLPPPDHLKQNFNDPILIPSTTTTTTTTATAINSQQPIIQQTSQPVSKIKQPVKQQQESQIPQTPQQQQQQQPPQQQPQQQQYNIPQTPQQTQQQFNIPQTPKQQQPIQTQPPMSPPKIDFVNYHRNHVDQFADILKKELISINQFESSKGSIPLENYINNIEQFLDSKQLLINHLRGIIQQHQQQPIQQQQQQQQPIQQQQQSTPQPSQLQTPQQRERARSQLQPPKPSIYSSRN.

In terms of domain architecture, SAM spans 3–66 (FENDQLYNWL…FHLLQQLKKQ (64 aa)). Disordered regions lie at residues 66 to 164 (QTPP…SDFM) and 178 to 308 (RQQY…EDDD). Residues 68 to 80 (PPISNTSSPVINS) are compositionally biased toward polar residues. Low complexity-rich tracts occupy residues 81 to 117 (NNNN…NNNN), 125 to 164 (TSTS…SDFM), 181 to 197 (YAKQ…KYQS), and 225 to 238 (QQQQ…QQQD). The segment covering 239–290 (FEFEEEEEEEDQQQQYDEEEEEEEEYEEDFYKEDLGEIDDGNVLDISDDEPD) has biased composition (acidic residues). In terms of domain architecture, Kinesin motor spans 453-775 (RIRVCVRKRP…LRYADRVKEL (323 aa)). 543–550 (GQTGSGKT) provides a ligand contact to ATP. 3 stretches are compositionally biased toward low complexity: residues 826–839 (INSQ…TSQP), 849–906 (QQQE…QTQP), and 981–1009 (PIQQ…QTPQ). Disordered regions lie at residues 826-915 (INSQ…KIDF) and 981-1030 (PIQQ…SSRN).

This sequence belongs to the TRAFAC class myosin-kinesin ATPase superfamily. Kinesin family.

It is found in the cytoplasm. It localises to the cytoskeleton. Microtubule-associated force-producing protein that plays a role in organelle transport. Its motor activity is directed toward the microtubule's plus end. This chain is Kinesin-related protein 6 (kif6), found in Dictyostelium discoideum (Social amoeba).